A 606-amino-acid chain; its full sequence is Probable translation initiation factor IF-2 (606 aa).

A tr-type G domain is found at 11 to 230 (IRQPIVVVLG…LTGLVQRFMK (220 aa)). The tract at residues 20–27 (GHVDHGKT) is G1. GTP is bound at residue 20–27 (GHVDHGKT). The tract at residues 45–49 (EITQH) is G2. The tract at residues 85–88 (DTPG) is G3. GTP-binding positions include 85 to 89 (DTPGH) and 139 to 142 (NKID). A G4 region spans residues 139-142 (NKID). A G5 region spans residues 207-209 (SAK).

This sequence belongs to the TRAFAC class translation factor GTPase superfamily. Classic translation factor GTPase family. IF-2 subfamily.

Function in general translation initiation by promoting the binding of the formylmethionine-tRNA to ribosomes. Seems to function along with eIF-2. In Staphylothermus marinus (strain ATCC 43588 / DSM 3639 / JCM 9404 / F1), this protein is Probable translation initiation factor IF-2.